A 175-amino-acid chain; its full sequence is Large ribosomal subunit protein uL10 (175 aa).

It belongs to the universal ribosomal protein uL10 family. In terms of assembly, part of the ribosomal stalk of the 50S ribosomal subunit. The N-terminus interacts with L11 and the large rRNA to form the base of the stalk. The C-terminus forms an elongated spine to which L12 dimers bind in a sequential fashion forming a multimeric L10(L12)X complex.

Forms part of the ribosomal stalk, playing a central role in the interaction of the ribosome with GTP-bound translation factors. The polypeptide is Large ribosomal subunit protein uL10 (Prochlorococcus marinus (strain MIT 9515)).